The chain runs to 227 residues: Isopentenyl-diphosphate delta-isomerase 2 (227 aa).

Lysine 36 provides a ligand contact to substrate. Positions 40 and 51 each coordinate Mg(2+). Positions 49-199 (LLHRAFSVVL…EVKVTPWLRT (151 aa)) constitute a Nudix hydrolase domain. The substrate site is built by arginine 70 and lysine 74. The active site involves serine 86. Residue serine 87 coordinates substrate. Residues glutamate 146 and glutamate 148 each coordinate Mg(2+). Glutamate 148 is an active-site residue. Positions 225–227 (HRV) match the Microbody targeting signal motif.

Belongs to the IPP isomerase type 1 family. Mg(2+) is required as a cofactor. As to expression, muscle-specific expression.

The protein resides in the peroxisome. It catalyses the reaction isopentenyl diphosphate = dimethylallyl diphosphate. Its pathway is isoprenoid biosynthesis; dimethylallyl diphosphate biosynthesis; dimethylallyl diphosphate from isopentenyl diphosphate: step 1/1. Catalyzes the 1,3-allylic rearrangement of the homoallylic substrate isopentenyl (IPP) to its highly electrophilic allylic isomer, dimethylallyl diphosphate (DMAPP). This chain is Isopentenyl-diphosphate delta-isomerase 2 (IDI2), found in Homo sapiens (Human).